The following is a 116-amino-acid chain: Flagellar transcriptional regulator FlhD (116 aa).

It belongs to the FlhD family. Homodimer; disulfide-linked. Forms a heterohexamer composed of two FlhC and four FlhD subunits. Each FlhC binds a FlhD dimer, forming a heterotrimer, and a hexamer assembles by dimerization of two heterotrimers.

Its subcellular location is the cytoplasm. Its function is as follows. Functions in complex with FlhC as a master transcriptional regulator that regulates transcription of several flagellar and non-flagellar operons by binding to their promoter region. Activates expression of class 2 flagellar genes, including fliA, which is a flagellum-specific sigma factor that turns on the class 3 genes. Also regulates genes whose products function in a variety of physiological pathways. In Salmonella arizonae (strain ATCC BAA-731 / CDC346-86 / RSK2980), this protein is Flagellar transcriptional regulator FlhD.